The primary structure comprises 425 residues: Trigger factor (425 aa).

The PPIase FKBP-type domain maps to 163–248 (GDTAVIDFEG…VHEIKTKELP (86 aa)).

The protein belongs to the FKBP-type PPIase family. Tig subfamily.

It is found in the cytoplasm. The catalysed reaction is [protein]-peptidylproline (omega=180) = [protein]-peptidylproline (omega=0). In terms of biological role, involved in protein export. Acts as a chaperone by maintaining the newly synthesized protein in an open conformation. Functions as a peptidyl-prolyl cis-trans isomerase. This is Trigger factor from Bacillus cereus (strain ATCC 10987 / NRS 248).